The chain runs to 286 residues: 4-hydroxybenzoate octaprenyltransferase (286 aa).

7 helical membrane passes run 21 to 40, 96 to 116, 142 to 162, 167 to 187, 210 to 230, 235 to 255, and 266 to 286; these read GTLL…AGGM, LFVI…GLVV, FLGV…TGEV, WWLF…YAMV, QIIG…GWSA, LYGL…MLIF, and FLNN…DYLF.

Belongs to the UbiA prenyltransferase family. Mg(2+) serves as cofactor.

It localises to the cell inner membrane. It catalyses the reaction all-trans-octaprenyl diphosphate + 4-hydroxybenzoate = 4-hydroxy-3-(all-trans-octaprenyl)benzoate + diphosphate. The protein operates within cofactor biosynthesis; ubiquinone biosynthesis. Catalyzes the prenylation of para-hydroxybenzoate (PHB) with an all-trans polyprenyl group. Mediates the second step in the final reaction sequence of ubiquinone-8 (UQ-8) biosynthesis, which is the condensation of the polyisoprenoid side chain with PHB, generating the first membrane-bound Q intermediate 3-octaprenyl-4-hydroxybenzoate. In Shewanella sp. (strain ANA-3), this protein is 4-hydroxybenzoate octaprenyltransferase.